Reading from the N-terminus, the 320-residue chain is Acetyl-coenzyme A carboxylase carboxyl transferase subunit alpha (320 aa).

The CoA carboxyltransferase C-terminal domain maps to 33–294; that stretch reads AFESEIQALR…GDAVEDELKA (262 aa).

This sequence belongs to the AccA family. In terms of assembly, acetyl-CoA carboxylase is a heterohexamer composed of biotin carboxyl carrier protein (AccB), biotin carboxylase (AccC) and two subunits each of ACCase subunit alpha (AccA) and ACCase subunit beta (AccD).

The protein resides in the cytoplasm. It carries out the reaction N(6)-carboxybiotinyl-L-lysyl-[protein] + acetyl-CoA = N(6)-biotinyl-L-lysyl-[protein] + malonyl-CoA. It functions in the pathway lipid metabolism; malonyl-CoA biosynthesis; malonyl-CoA from acetyl-CoA: step 1/1. Functionally, component of the acetyl coenzyme A carboxylase (ACC) complex. First, biotin carboxylase catalyzes the carboxylation of biotin on its carrier protein (BCCP) and then the CO(2) group is transferred by the carboxyltransferase to acetyl-CoA to form malonyl-CoA. The polypeptide is Acetyl-coenzyme A carboxylase carboxyl transferase subunit alpha (Caulobacter sp. (strain K31)).